We begin with the raw amino-acid sequence, 232 residues long: Peptidyl-prolyl cis-trans isomerase FKBP18, chloroplastic (232 aa).

The PPIase FKBP-type domain maps to 108–226 (GSTAQVHFDC…ELNIELLRVT (119 aa)).

This sequence belongs to the FKBP-type PPIase family.

Its subcellular location is the plastid. It localises to the chloroplast thylakoid lumen. It catalyses the reaction [protein]-peptidylproline (omega=180) = [protein]-peptidylproline (omega=0). In terms of biological role, PPIases accelerate the folding of proteins. It catalyzes the cis-trans isomerization of proline imidic peptide bonds in oligopeptides. This Arabidopsis thaliana (Mouse-ear cress) protein is Peptidyl-prolyl cis-trans isomerase FKBP18, chloroplastic (FKBP18).